A 414-amino-acid polypeptide reads, in one-letter code: Serine/threonine transporter SstT (414 aa).

Over 2-15 the chain is Cytoplasmic; it reads TTQRSPGLFRRLAH. The helical transmembrane segment at 16-36 threads the bilayer; the sequence is GSLVKQILVGLVLGILLAWIS. Residues 37–45 lie on the Periplasmic side of the membrane; sequence KPAAEAVGL. The chain crosses the membrane as a helical span at residues 46-66; that stretch reads LGTLFVGALKAVAPILVLMLV. At 67–83 the chain is on the cytoplasmic side; sequence MASIANHQHGQKTNIRP. The helical transmembrane segment at 84–104 threads the bilayer; the sequence is ILFLYLLGTFSAALAAVVFSF. Topologically, residues 105–142 are periplasmic; it reads AFPSTLHLSSSAGDISPPSGIVEVMRGLVMSMVSNPID. A helical transmembrane segment spans residues 143–163; that stretch reads ALLKGNYIGILVWAIGLGFAL. Topologically, residues 164 to 179 are cytoplasmic; it reads RHGNETTKNLVNDMSN. Residues 180–200 traverse the membrane as a helical segment; that stretch reads AVTFMVKLVIRFAPIGIFGLV. Topologically, residues 201 to 217 are periplasmic; that stretch reads SSTLATTGFSTLWGYAQ. The helical transmembrane segment at 218-238 threads the bilayer; it reads LLVVLVGCMLLVALVVNPLLV. Residues 239–299 are Cytoplasmic-facing; sequence WWKIRRNPFP…VSIPLGATIN (61 aa). A helical membrane pass occupies residues 300–320; that stretch reads MAGAAITITVLTLAAVNTLGI. At 321-331 the chain is on the periplasmic side; sequence PVDLPTALLLS. A helical membrane pass occupies residues 332-352; that stretch reads VVASLCACGASGVAGGSLLLI. Over 353–414 the chain is Cytoplasmic; it reads PLACNMFGIS…DRLANSALRN (62 aa).

The protein belongs to the dicarboxylate/amino acid:cation symporter (DAACS) (TC 2.A.23) family.

The protein localises to the cell inner membrane. The enzyme catalyses L-serine(in) + Na(+)(in) = L-serine(out) + Na(+)(out). It catalyses the reaction L-threonine(in) + Na(+)(in) = L-threonine(out) + Na(+)(out). Functionally, involved in the import of serine and threonine into the cell, with the concomitant import of sodium (symport system). The polypeptide is Serine/threonine transporter SstT (Shigella flexneri serotype 5b (strain 8401)).